Here is a 3149-residue protein sequence, read N- to C-terminus: Large tegument protein deneddylase (3149 aa).

Residues 1–13 (MSNGDWGQSQRTR) are compositionally biased toward polar residues. A disordered region spans residues 1 to 30 (MSNGDWGQSQRTRGTGPVRGIRTMDVNAPG). The deubiquitination activity stretch occupies residues 1–268 (MSNGDWGQSQ…YEANGSGFDL (268 aa)). The Peptidase C76 domain occupies 41–258 (LGTASCNQAH…MLEHYGVYDF (218 aa)). Catalysis depends on residues C61, D193, and H195. Residues 319-341 (PAARYSPAKTNSPPSSPASAAPA) form a disordered region. 8 consecutive repeat copies span residues 335–339 (PASAA), 340–344 (PASAA), 345–349 (PASAA), 350–354 (PASAA), 355–359 (PASAA), 360–364 (PASAA), 365–369 (PASAA), and 370–374 (PASAA). The tract at residues 335-374 (PASAAPASAAPASAAPASAAPASAAPASAAPASAAPASAA) is 8 X 5 AA repeats of P-A-S-A-A. Disordered regions lie at residues 382 to 656 (FIPI…GSGL), 901 to 923 (LLSG…SIYR), 1143 to 1166 (APIS…TPPL), 1412 to 1434 (GRKE…RARE), 1644 to 1677 (PEAT…SALW), 2583 to 2839 (GLVS…PTAV), 2852 to 2981 (AAAS…PGAR), and 2995 to 3019 (QTYT…KCKD). Residues 462–483 (LPPPVIPIPHQSPPASPTPHPA) are compositionally biased toward pro residues. Low complexity-rich tracts occupy residues 509 to 536 (AAPS…TTTL) and 544 to 564 (QPPQ…QPTP). The segment at 554–584 (SPLLPQQQPTPSAAPAPSPLLPQQQPPPSAA) is interaction with inner tegument protein. The segment covering 565-609 (SAAPAPSPLLPQQQPPPSAARAPSPLPPQQQPLPSATPAPPPAQQ) has biased composition (pro residues). Over residues 1143 to 1155 (APISPASPSATPA) the composition is skewed to low complexity. Residues 2592–2603 (SADNTPASSDRL) are compositionally biased toward polar residues. The segment covering 2711-2720 (QPAPQQPPSS) has biased composition (pro residues). 2 stretches are compositionally biased toward polar residues: residues 2734 to 2745 (SPHSTPSTASGS) and 2784 to 2804 (SAAS…SSQD). A compositionally biased stretch (basic and acidic residues) spans 2812 to 2827 (MQREKKQQGGREEAAE). Residues 2874 to 2885 (APALGSGLAAPA) are compositionally biased toward low complexity.

This sequence belongs to the herpesviridae large tegument protein family. In terms of assembly, interacts with host CUL1 and CUL4A; these interactions inhibit the E3 ligase activity of cullins. Interacts with inner tegument protein. Interacts with capsid vertex specific component CVC2. Interacts with the major capsid protein/MCP. Interacts with host TRIM25 and YWHAZ.

It is found in the virion tegument. Its subcellular location is the host cytoplasm. The protein localises to the host nucleus. The catalysed reaction is Thiol-dependent hydrolysis of ester, thioester, amide, peptide and isopeptide bonds formed by the C-terminal Gly of ubiquitin (a 76-residue protein attached to proteins as an intracellular targeting signal).. Its function is as follows. Large tegument protein that plays multiple roles in the viral cycle. During viral entry, remains associated with the capsid while most of the tegument is detached and participates in the capsid transport toward the host nucleus. Plays a role in the routing of the capsid at the nuclear pore complex and subsequent uncoating. Within the host nucleus, acts as a deneddylase and promotes the degradation of nuclear CRLs (cullin-RING ubiquitin ligases) and thereby stabilizes nuclear CRL substrates, while cytoplasmic CRLs remain unaffected. These modifications prevent host cell cycle S-phase progression and create a favorable environment allowing efficient viral genome replication. Participates later in the secondary envelopment of capsids. Indeed, plays a linker role for the association of the outer viral tegument to the capsids together with the inner tegument protein. Counteracts host TLR-mediated NF-kappa-B activation through both MYD88 and TICAM1-dependent pathways by interfering with 'Lys-63'- and 'Lys-48'-linked ubiquitination of signaling intermediates such as TRAF6 and IKBKG. Inhibits type I interferon production by forming a tri-molecular complex with host TRIM25 and 14-3-3 thereby promoting TRIM25 autoubiquitination and sequestration of the ligase into inactive protein aggregates. In turn, host RIGI is recruited to the complex but ubiquitination is severely impaired leading to inhibition of the pathway. Also catalyzes the removal of 'Lys-48'- and 'Lys-63'-linked ubiquitin chains on host TBK1 and STING1 suppressing cGAS-STING signaling in addition to the RIGI-MAVS pathway. Inhibits selective autophagy by deubiquitinating host SQSTM1. In turn, decreased SQSTM1 ubiquitination fails to recruit LC3 to SQSTM1-positive aggregates. In the host nucleus, deubiquitinates topoisomerase II subunits TOP2A and TOP2B thereby stabilizing SUMOylated TOP2 which halts the DNA damage response to TOP2-induced double strand DNA breaks and promotes cell survival. The sequence is that of Large tegument protein deneddylase from Epstein-Barr virus (strain B95-8) (HHV-4).